A 79-amino-acid polypeptide reads, in one-letter code: Acyl carrier protein (79 aa).

In terms of domain architecture, Carrier spans 2 to 77; it reads SDVAERVKKI…DAVNFLEKAT (76 aa). Ser-37 is modified (O-(pantetheine 4'-phosphoryl)serine).

Belongs to the acyl carrier protein (ACP) family. In terms of processing, 4'-phosphopantetheine is transferred from CoA to a specific serine of apo-ACP by AcpS. This modification is essential for activity because fatty acids are bound in thioester linkage to the sulfhydryl of the prosthetic group.

The protein localises to the cytoplasm. It participates in lipid metabolism; fatty acid biosynthesis. In terms of biological role, carrier of the growing fatty acid chain in fatty acid biosynthesis. The chain is Acyl carrier protein from Methylocella silvestris (strain DSM 15510 / CIP 108128 / LMG 27833 / NCIMB 13906 / BL2).